The chain runs to 221 residues: PKHD-type hydroxylase P9515_13321 (221 aa).

The region spanning 80–174 (TIHGIMFTKS…RLVCVGWIES (95 aa)) is the Fe2OG dioxygenase domain. 3 residues coordinate Fe cation: His98, Asp100, and His155. Arg165 is a 2-oxoglutarate binding site.

Fe(2+) is required as a cofactor. It depends on L-ascorbate as a cofactor.

In Prochlorococcus marinus (strain MIT 9515), this protein is PKHD-type hydroxylase P9515_13321.